Reading from the N-terminus, the 629-residue chain is Solute carrier family 22 member 14 (629 aa).

The tract at residues 1-21 (MKEDQNYKTAFGSQNSRDTHR) is disordered. The Cytoplasmic segment spans residues 1-67 (MKEDQNYKTA…IGEFGTFQWR (67 aa)). Residues 7–16 (YKTAFGSQNS) show a composition bias toward polar residues. The helical transmembrane segment at 68 to 88 (LVVLTFIPSILSTFFIFSHHF) threads the bilayer. Topologically, residues 89 to 183 (LLTAQRPYCN…LVCGNEPNKE (95 aa)) are extracellular. N-linked (GlcNAc...) asparagine glycosylation is found at asparagine 98, asparagine 116, asparagine 124, and asparagine 149. Residues 184–204 (NGLTVFLSGVLTGSLLFGFLS) traverse the membrane as a helical segment. The Cytoplasmic portion of the chain corresponds to 205–209 (DKLGR). A helical transmembrane segment spans residues 210–230 (YPIILLSLLGFLIFGFGTAFV). At 231–240 (SSFYQYLFFR) the chain is on the extracellular side. The chain crosses the membrane as a helical span at residues 241–261 (FFVAQASVGYAICSVSLVMEW). Topologically, residues 262-269 (LVGEHRAQ) are cytoplasmic. A helical transmembrane segment spans residues 270 to 290 (AVILQHSFLTIGVILLTGLAY). Topologically, residues 291 to 295 (KVVHW) are extracellular. A helical transmembrane segment spans residues 296–316 (RLLCLLGGMPMFPLICNIWVL). The Cytoplasmic portion of the chain corresponds to 317–378 (RESPRWLMVR…DFCTNQHLFK (62 aa)). A helical transmembrane segment spans residues 379–399 (VVLAIGCVWFTVSYISFTLNL). At 400–409 (KMNDFGLDVY) the chain is on the extracellular side. Residues 410-430 (FVQMVRSIVAVPARLCCIILL) form a helical membrane-spanning segment. Over 431–436 (EYFGRK) the chain is Cytoplasmic. Residues 437-457 (WALNLTLFLVTSMCLFLLFLP) traverse the membrane as a helical segment. The Extracellular segment spans residues 458 to 463 (QEPKST). The chain crosses the membrane as a helical span at residues 464–484 (IILTLMLAEFSMAGTLSIFFI). The Cytoplasmic portion of the chain corresponds to 485 to 496 (YTAELLPTVLRS). Residues 497 to 517 (TGLGMVSLAWVAGAISSVAIF) form a helical membrane-spanning segment. Residues 518-523 (KQTKTQ) lie on the Extracellular side of the membrane. A helical membrane pass occupies residues 524-544 (LPIFFCCLCCVLALCFSSLVP). At 545 to 629 (ETGSQSLRDS…PVQSLKAQPP (85 aa)) the chain is on the cytoplasmic side.

The protein belongs to the major facilitator (TC 2.A.1) superfamily. Organic cation transporter (TC 2.A.1.19) family. Testis-specific (at protein level). Specifically expressed in male germ cells (at protein level).

It is found in the mitochondrion inner membrane. Its subcellular location is the cell projection. It localises to the cilium. The protein localises to the flagellum membrane. The catalysed reaction is riboflavin(in) = riboflavin(out). Riboflavin transporter localized at the inner mitochondrial membrane of the spermatozoa midpiece, which is required for male fertility. SLC22A14-mediated riboflavin transport is essential for spermatozoa energy generation and motility: riboflavin is the precursor of FMN and FAD, which are coenzymes of many enzymes in the TCA cycle (the citric acid cycle) in mitochondria. Required for sperm motility and normal sperm flagellar structure. In Mus musculus (Mouse), this protein is Solute carrier family 22 member 14.